The primary structure comprises 354 residues: Ferrochelatase (354 aa).

Positions 191 and 271 each coordinate Fe cation.

This sequence belongs to the ferrochelatase family.

It localises to the cytoplasm. It carries out the reaction heme b + 2 H(+) = protoporphyrin IX + Fe(2+). It functions in the pathway porphyrin-containing compound metabolism; protoheme biosynthesis; protoheme from protoporphyrin-IX: step 1/1. Catalyzes the ferrous insertion into protoporphyrin IX. In Rickettsia bellii (strain OSU 85-389), this protein is Ferrochelatase.